The following is a 124-amino-acid chain: Small ribosomal subunit protein uS12 (124 aa).

Aspartate 89 is subject to 3-methylthioaspartic acid.

This sequence belongs to the universal ribosomal protein uS12 family. Part of the 30S ribosomal subunit. Contacts proteins S8 and S17. May interact with IF1 in the 30S initiation complex.

Functionally, with S4 and S5 plays an important role in translational accuracy. In terms of biological role, interacts with and stabilizes bases of the 16S rRNA that are involved in tRNA selection in the A site and with the mRNA backbone. Located at the interface of the 30S and 50S subunits, it traverses the body of the 30S subunit contacting proteins on the other side and probably holding the rRNA structure together. The combined cluster of proteins S8, S12 and S17 appears to hold together the shoulder and platform of the 30S subunit. This Buchnera aphidicola subsp. Cinara cedri (strain Cc) protein is Small ribosomal subunit protein uS12.